Consider the following 700-residue polypeptide: Glutamine synthetase (700 aa).

Residues 65 to 155 (YHFTPPGSSP…LPTAFCSYGG (91 aa)) form the GS beta-grasp domain. One can recognise a GS catalytic domain in the interval 159-589 (DRDSLLRSME…TMQEMIRKDL (431 aa)). Glutamate 196, glutamate 198, glutamate 267, and glutamate 274 together coordinate Mg(2+). Residues 318–319 (NG) and glycine 319 each bind L-glutamate. Histidine 323 is a Mg(2+) binding site. Positions 327 and 435 each coordinate ATP. Arginine 435 is an L-glutamate binding site. Glutamate 472 lines the Mg(2+) pocket.

Belongs to the glutamine synthetase family. Homohexamer. It depends on Mg(2+) as a cofactor.

The protein resides in the cytoplasm. It catalyses the reaction L-glutamate + NH4(+) + ATP = L-glutamine + ADP + phosphate + H(+). Its activity is regulated as follows. The activity of this enzyme is not controlled by adenylation. Functionally, catalyzes the ATP-dependent biosynthesis of glutamine from glutamate and ammonia. This Butyrivibrio fibrisolvens protein is Glutamine synthetase.